The following is an 867-amino-acid chain: Heat shock 70 kDa protein 17 (867 aa).

Positions 1-24 are cleaved as a signal peptide; the sequence is MGKIFSWLVVLLSLISLVPVPSES. Composition is skewed to polar residues over residues 560-575 and 587-598; these read TIDS…ATDE and DAENSTASNTTA. 2 disordered regions span residues 560–607 and 829–867; these read TIDS…ASLG and PKPK…HDEL. A compositionally biased stretch (basic and acidic residues) spans 833–867; that stretch reads PKIEKVTKTENTTKEEEQSKSSDEAAKEEESHDEL. Positions 865–867 match the Prevents secretion from ER motif; sequence DEL.

The protein belongs to the heat shock protein 70 (TC 1.A.33) family. HSP110/SSE subfamily.

Its subcellular location is the endoplasmic reticulum lumen. The chain is Heat shock 70 kDa protein 17 (HSP70-17) from Arabidopsis thaliana (Mouse-ear cress).